Here is a 1523-residue protein sequence, read N- to C-terminus: Slit homolog 3 protein (1523 aa).

Residues 1-33 (MAPGRTGAGAAVRARLALALALASILSGPPAAA) form the signal peptide. An LRRNT domain is found at 34-61 (CPTKCTCSAASVDCHGLGLRAVPRGIPR). LRR repeat units follow at residues 62-83 (NAERLDLDRNNITRITKMDFTG), 86-107 (NLRVLHLEDNQVSVIERGAFQD), 110-131 (QLERLRLNKNKLQVLPELLFQS), 134-155 (KLTRLDLSENQIQGIPRKAFRG), 158-179 (GVKNLQLDNNHISCIEDGAFRA), and 182-203 (DLEILTLNNNNISRILVTSFNH). Residue Asn72 is glycosylated (N-linked (GlcNAc...) asparagine). N-linked (GlcNAc...) asparagine glycosylation occurs at Asn192. The 51-residue stretch at 215-265 (NHLYCDCHLAWLSDWLRQRRTIGQFTLCMAPVHLRGFSVADVQKKEYVCPG) folds into the LRRCT 1 domain. Residues 271–307 (PACNANSLSCPSACSCSNNIVDCRGKGLTEIPANLPE) form the LRRNT 2 domain. Cys284 and Cys293 are disulfide-bonded. 5 LRR repeats span residues 308-329 (GIVEIRLEQNSIKSIPAGAFIQ), 332-353 (KLKRIDISKNQISDIAPDAFQG), 356-377 (SLTSLVLYGNKITEIPKGLFDG), 380-401 (SLQLLLLNANKINCLRVNTFQD), and 404-425 (NLNLLSLYDNKLQTISKGLFAP). An LRRCT 2 domain is found at 437–487 (NPFVCDCHLKWLADYLQDNPIETSGARCSSPRRLANKRISQIKSKKFRCSG). Cystine bridges form between Cys441–Cys464, Cys443–Cys485, Cys505–Cys511, and Cys509–Cys518. Residues 496-532 (SSECFMDLVCPEKCRCEGTIVDCSNQKLSRIPSHLPE) form the LRRNT 3 domain. LRR repeat units follow at residues 533 to 554 (YTTDLRLNDNDIAVLEATGIFK), 558 to 579 (NLRKINLSNNRIKEVREGAFDG), 582 to 603 (GVQELMLTGNQLETMHGRMFRG), 606 to 627 (GLKTLMLRSNLISCVNNDTFAG), and 630 to 651 (SVRLLSLYDNRITTISPGAFTT). Asn563 carries N-linked (GlcNAc...) asparagine glycosylation. The N-linked (GlcNAc...) asparagine glycan is linked to Asn622. Residues 663–713 (NPFNCNCHMAWLGRWLRKRRIVSGNPRCQKPFFLKEIPIQDVAIQDFTCEG) enclose the LRRCT 3 domain. Intrachain disulfides connect Cys667–Cys690 and Cys669–Cys711. Positions 716 to 752 (ENSCQLSPRCPEQCTCVETVVRCSNRGLHTLPKGMPK) constitute an LRRNT 4 domain. 4 LRR repeats span residues 753 to 774 (DVTELYLEGNHLTAVPKELSTF), 776 to 797 (QLTLIDLSNNSISMLTNHTFSN), 800 to 821 (HLSTLILSYNRLRCIPVHAFNG), and 824 to 845 (SLRVLTLHGNDISSVPEGSFND). 3 N-linked (GlcNAc...) asparagine glycosylation sites follow: Asn784, Asn792, and Asn797. The LRRCT 4 domain occupies 857 to 907 (NPLHCDCSLRWLSEWIKAGYKEPGIARCSSPESMADRLLLTTPTHRFQCKG). EGF-like domains follow at residues 918–953 (NACLSSPCKNNGTCSQDPVEQYRCTCPYSYKGKDCT), 955–994 (PINTCVQNPCQHGGTCHLSESHRDGFSCSCPLGFEGQRCE), 996–1032 (NPDDCEDNDCENSATCVDGINNYACVCPPNYTGELCD), 1034–1072 (VIDYCVPEMNLCQHEAKCISLDKGFRCECVPGYSGKLCE), 1074–1110 (DNDDCVAHKCRHGAQCVDAVNGYTCICPQGFSGLFCE), and 1119–1155 (QTSPCDQYECQNGAQCIVVQQEPTCRCPPGFAGPRCE). Disulfide bonds link Cys920–Cys931, Cys925–Cys941, Cys943–Cys952, Cys959–Cys970, Cys964–Cys982, Cys984–Cys993, Cys1000–Cys1011, Cys1005–Cys1020, Cys1022–Cys1031, Cys1038–Cys1051, Cys1045–Cys1060, Cys1062–Cys1071, Cys1078–Cys1089, Cys1083–Cys1098, Cys1100–Cys1109, Cys1123–Cys1134, Cys1128–Cys1143, and Cys1145–Cys1154. An N-linked (GlcNAc...) asparagine glycan is attached at Asn928. A glycan (N-linked (GlcNAc...) asparagine) is linked at Asn1025. The Laminin G-like domain occupies 1158-1332 (ITVNFVGKDS…PQSLGVSPGC (175 aa)). N-linked (GlcNAc...) asparagine glycosylation is found at Asn1181 and Asn1247. Intrachain disulfides connect Cys1305–Cys1332, Cys1355–Cys1364, Cys1372–Cys1382, Cys1377–Cys1391, and Cys1393–Cys1402. EGF-like domains follow at residues 1340-1365 (HGLCRSVEKDSVVCECHPGWTGPLCD) and 1368-1403 (AQDPCLGHSCSHGTCVATGNSYVCKCAEGYEGPLCD). Asn1406 is a glycosylation site (N-linked (GlcNAc...) asparagine). The EGF-like 9 domain maps to 1408 to 1444 (SANACSAFKCHHGQCHISDRGEPYCLCQPGFSGNHCE). 7 cysteine pairs are disulfide-bonded: Cys1412–Cys1422, Cys1417–Cys1432, Cys1434–Cys1443, Cys1449–Cys1487, Cys1467–Cys1501, Cys1478–Cys1517, and Cys1482–Cys1519. A CTCK domain is found at 1449 to 1523 (CLGEIVREAI…HLECGCRECS (75 aa)).

It is found in the secreted. In terms of biological role, may act as molecular guidance cue in cellular migration, and function may be mediated by interaction with roundabout homolog receptors. This Rattus norvegicus (Rat) protein is Slit homolog 3 protein (Slit3).